The following is a 342-amino-acid chain: Leucine-rich repeat-containing protein 23 (342 aa).

The segment covering 1–30 has biased composition (acidic residues); it reads MSDEDDLEDFETDQDDLEREDDEKETEEWE. The segment at 1 to 42 is disordered; sequence MSDEDDLEDFETDQDDLEREDDEKETEEWEDYRKEGEESEDW. A coiled-coil region spans residues 3 to 27; sequence DEDDLEDFETDQDDLEREDDEKETE. LRR repeat units lie at residues 91–112, 113–133, 134–154, 155–176, 179–199, 200–221, 222–243, and 245–266; these read HLRY…NHLT, NLLW…NELP, YLQI…ISHP, RLAS…DPQK, SLHT…INLP, KLKN…ENLS, NLTT…SKEM, and SLQY…AKLR. The interaction with RSPH9 stretch occupies residues 207–342; that stretch reads AQNMLKKVEG…PESELDQSST (136 aa). The 39-residue stretch at 279-317 folds into the LRRCT domain; sequence NPCTDENDYRQEALVQIAHLERLDKEFYEEEERAEADEI. Positions 306 to 332 form a coiled coil; sequence YEEEERAEADEIRQRMKEEQEQEAEVE. Positions 307–342 are disordered; sequence EEEERAEADEIRQRMKEEQEQEAEVEPESELDQSST. Residues 314-324 are compositionally biased toward basic and acidic residues; sequence ADEIRQRMKEE. Acidic residues predominate over residues 325–342; sequence QEQEAEVEPESELDQSST.

As to quaternary structure, component of the axonemal radial spoke complex. Interacts with RSPH3. Interacts with RSPH9.

The protein resides in the cytoplasm. It localises to the cytoskeleton. Its subcellular location is the flagellum axoneme. In terms of biological role, essential for sperm motility and male fertility. Plays an important role in the proper assembly of the third radial spoke (RS3) head and the bridge structure between RS2 and RS3 in the sperm flagella. The chain is Leucine-rich repeat-containing protein 23 (LRRC23) from Bos taurus (Bovine).